A 310-amino-acid chain; its full sequence is MNLQDDQTSADLFQVATFYSFTAWTEVTIACLLHDLLSLGDEHQLMGTVLLAEEGVNGTICGSVDGVSALLERLESDLIEGLFELKISWTPEQAFRRFKVRRKAEIVTMGLAGLNPSKTVGTYVDAHEWNDLIDDPDTLLIDTRNDYEVAIGEFKGAINPQTKCFRDFPAWVEQQLRSMVKAQTPARIAMYCTGGIRCEKATSYLIEKGFTNVHHLRGGILRYFEEVSQTESRWQGECFVFDQRVALNHQLSPGVHCLCHACGMPLTPEDQTMNSYLPGVQCRHCVDQFSDTDRIRFAERQRQMEHSSRK.

Residues 134-232 (DDPDTLLIDT…YFEEVSQTES (99 aa)) form the Rhodanese domain. The active-site Cysteine persulfide intermediate is the Cys-192.

This sequence belongs to the TrhO family.

It carries out the reaction uridine(34) in tRNA + AH2 + O2 = 5-hydroxyuridine(34) in tRNA + A + H2O. Its function is as follows. Catalyzes oxygen-dependent 5-hydroxyuridine (ho5U) modification at position 34 in tRNAs. The chain is tRNA uridine(34) hydroxylase from Prochlorococcus marinus (strain MIT 9313).